The following is a 188-amino-acid chain: Elongation factor P (188 aa).

K34 bears the N6-(3,6-diaminohexanoyl)-5-hydroxylysine mark.

The protein belongs to the elongation factor P family. In terms of processing, may be beta-lysylated on the epsilon-amino group of Lys-34 by the combined action of EpmA and EpmB, and then hydroxylated on the C5 position of the same residue by EpmC (if this protein is present). Lysylation is critical for the stimulatory effect of EF-P on peptide-bond formation. The lysylation moiety may extend toward the peptidyltransferase center and stabilize the terminal 3-CCA end of the tRNA. Hydroxylation of the C5 position on Lys-34 may allow additional potential stabilizing hydrogen-bond interactions with the P-tRNA.

The protein resides in the cytoplasm. The protein operates within protein biosynthesis; polypeptide chain elongation. Functionally, involved in peptide bond synthesis. Alleviates ribosome stalling that occurs when 3 or more consecutive Pro residues or the sequence PPG is present in a protein, possibly by augmenting the peptidyl transferase activity of the ribosome. Modification of Lys-34 is required for alleviation. The chain is Elongation factor P from Sodalis glossinidius (strain morsitans).